We begin with the raw amino-acid sequence, 267 residues long: Thiamine thiazole synthase (267 aa).

Residues S41, 60-61, G68, V132, and 160-162 each bind NAD(+); these read ER and HVD. The Fe cation site is built by D162 and H177. Residue M227 participates in NAD(+) binding. Glycine is bound at residue R237.

Belongs to the THI4 family. In terms of assembly, homooctamer; tetramer of dimers. The cofactor is Fe(2+).

It carries out the reaction hydrogen sulfide + glycine + NAD(+) = ADP-5-ethyl-4-methylthiazole-2-carboxylate + nicotinamide + 3 H2O + H(+). It functions in the pathway cofactor biosynthesis; thiamine diphosphate biosynthesis. Its function is as follows. Involved in the biosynthesis of the thiazole moiety of thiamine. Catalyzes the conversion of NAD and glycine to adenosine diphosphate 5-(2-hydroxyethyl)-4-methylthiazole-2-carboxylate (ADT), an adenylated thiazole intermediate, using free sulfide as a source of sulfur. This Saccharolobus solfataricus (strain ATCC 35092 / DSM 1617 / JCM 11322 / P2) (Sulfolobus solfataricus) protein is Thiamine thiazole synthase.